We begin with the raw amino-acid sequence, 138 residues long: TYLQALPYFDRLLNIQPPPREKMFEFYERMHAAYIRPGGVHQDLPLGLMDDIYEFSKNFSLRIDEVEEMLTNNRKTQPYDVYDQVEFDVPIGSRLYTEGYQVPPGATYTAIEAPKGHMLADVVAIIGTQDIVFGEIDR.

The protein belongs to the complex I 49 kDa subunit family. Core subunit of respiratory chain NADH dehydrogenase (Complex I) which is composed of 45 different subunits. Component of the iron-sulfur (IP) fragment of the enzyme. Interacts with NDUFAF3. Interacts with NDUFAF7. Interacts with CERS2. [4Fe-4S] cluster is required as a cofactor. In terms of processing, dimethylation at Arg-118 by NDUFAF7 takes place after NDUFS2 assembles into the complex I, leading to stabilize the early intermediate complex.

The protein localises to the mitochondrion inner membrane. It catalyses the reaction a ubiquinone + NADH + 5 H(+)(in) = a ubiquinol + NAD(+) + 4 H(+)(out). Functionally, core subunit of the mitochondrial membrane respiratory chain NADH dehydrogenase (Complex I) which catalyzes electron transfer from NADH through the respiratory chain, using ubiquinone as an electron acceptor. Essential for the catalytic activity and assembly of complex I. Redox-sensitive, critical component of the oxygen-sensing pathway in the pulmonary vasculature which plays a key role in acute pulmonary oxygen-sensing and hypoxic pulmonary vasoconstriction. Plays an important role in carotid body sensing of hypoxia. Essential for glia-like neural stem and progenitor cell proliferation, differentiation and subsequent oligodendrocyte or neuronal maturation. In Mesocricetus auratus (Golden hamster), this protein is NADH dehydrogenase [ubiquinone] iron-sulfur protein 2, mitochondrial.